Reading from the N-terminus, the 126-residue chain is Holo-[acyl-carrier-protein] synthase (126 aa).

Mg(2+) contacts are provided by Asp9 and Glu58.

It belongs to the P-Pant transferase superfamily. AcpS family. Requires Mg(2+) as cofactor.

The protein resides in the cytoplasm. It carries out the reaction apo-[ACP] + CoA = holo-[ACP] + adenosine 3',5'-bisphosphate + H(+). In terms of biological role, transfers the 4'-phosphopantetheine moiety from coenzyme A to a Ser of acyl-carrier-protein. This Vibrio atlanticus (strain LGP32) (Vibrio splendidus (strain Mel32)) protein is Holo-[acyl-carrier-protein] synthase.